Reading from the N-terminus, the 340-residue chain is Adenosine deaminase (340 aa).

Positions 15 and 17 each coordinate Zn(2+). Substrate-binding residues include histidine 17, aspartate 19, and glycine 172. Histidine 199 lines the Zn(2+) pocket. The active-site Proton donor is glutamate 202. Aspartate 279 is a binding site for Zn(2+).

Belongs to the metallo-dependent hydrolases superfamily. Adenosine and AMP deaminases family. Adenosine deaminase subfamily. The cofactor is Zn(2+).

The enzyme catalyses adenosine + H2O + H(+) = inosine + NH4(+). The catalysed reaction is 2'-deoxyadenosine + H2O + H(+) = 2'-deoxyinosine + NH4(+). Its function is as follows. Catalyzes the hydrolytic deamination of adenosine and 2-deoxyadenosine. This Streptococcus agalactiae serotype III (strain NEM316) protein is Adenosine deaminase.